Reading from the N-terminus, the 612-residue chain is Dihydroxy-acid dehydratase (612 aa).

Asp-81 provides a ligand contact to Mg(2+). Position 122 (Cys-122) interacts with [2Fe-2S] cluster. Residues Asp-123 and Lys-124 each coordinate Mg(2+). The residue at position 124 (Lys-124) is an N6-carboxylysine. Cys-193 is a binding site for [2Fe-2S] cluster. A Mg(2+)-binding site is contributed by Glu-489. Ser-515 serves as the catalytic Proton acceptor.

It belongs to the IlvD/Edd family. As to quaternary structure, homodimer. [2Fe-2S] cluster serves as cofactor. Requires Mg(2+) as cofactor.

It catalyses the reaction (2R)-2,3-dihydroxy-3-methylbutanoate = 3-methyl-2-oxobutanoate + H2O. The catalysed reaction is (2R,3R)-2,3-dihydroxy-3-methylpentanoate = (S)-3-methyl-2-oxopentanoate + H2O. It participates in amino-acid biosynthesis; L-isoleucine biosynthesis; L-isoleucine from 2-oxobutanoate: step 3/4. Its pathway is amino-acid biosynthesis; L-valine biosynthesis; L-valine from pyruvate: step 3/4. Functions in the biosynthesis of branched-chain amino acids. Catalyzes the dehydration of (2R,3R)-2,3-dihydroxy-3-methylpentanoate (2,3-dihydroxy-3-methylvalerate) into 2-oxo-3-methylpentanoate (2-oxo-3-methylvalerate) and of (2R)-2,3-dihydroxy-3-methylbutanoate (2,3-dihydroxyisovalerate) into 2-oxo-3-methylbutanoate (2-oxoisovalerate), the penultimate precursor to L-isoleucine and L-valine, respectively. This chain is Dihydroxy-acid dehydratase, found in Stutzerimonas stutzeri (strain A1501) (Pseudomonas stutzeri).